The primary structure comprises 434 residues: Eukaryotic translation initiation factor 3 subunit E-1 (434 aa).

Residues 219-392 (FFNHPKGRDL…GHVVMGTQPL (174 aa)) form the PCI domain.

It belongs to the eIF-3 subunit E family. As to quaternary structure, component of the eukaryotic translation initiation factor 3 (eIF-3) complex. The eIF-3 complex interacts with pix. Interacts with mxt.

It localises to the cytoplasm. Component of the eukaryotic translation initiation factor 3 (eIF-3) complex, which is involved in protein synthesis of a specialized repertoire of mRNAs and, together with other initiation factors, stimulates binding of mRNA and methionyl-tRNAi to the 40S ribosome. The eIF-3 complex specifically targets and initiates translation of a subset of mRNAs involved in cell proliferation. This is Eukaryotic translation initiation factor 3 subunit E-1 (eIF3-S6-1) from Drosophila willistoni (Fruit fly).